Reading from the N-terminus, the 193-residue chain is Ribosome hibernation promotion factor (193 aa).

This sequence belongs to the HPF/YfiA ribosome-associated protein family. Long HPF subfamily. Interacts with 100S ribosomes.

It is found in the cytoplasm. Might modulate either transcription and/or translation. Functionally, required for dimerization of active 70S ribosomes into 100S ribosomes in stationary phase; 100S ribosomes are translationally inactive and sometimes present during exponential growth. This is Ribosome hibernation promotion factor from Picosynechococcus sp. (strain ATCC 27264 / PCC 7002 / PR-6) (Agmenellum quadruplicatum).